The chain runs to 499 residues: Probable cytosol aminopeptidase (499 aa).

Residues Lys-271 and Asp-276 each coordinate Mn(2+). Residue Lys-283 is part of the active site. Mn(2+)-binding residues include Asp-294, Asp-353, and Glu-355. Residue Arg-357 is part of the active site.

This sequence belongs to the peptidase M17 family. Mn(2+) serves as cofactor.

It localises to the cytoplasm. The catalysed reaction is Release of an N-terminal amino acid, Xaa-|-Yaa-, in which Xaa is preferably Leu, but may be other amino acids including Pro although not Arg or Lys, and Yaa may be Pro. Amino acid amides and methyl esters are also readily hydrolyzed, but rates on arylamides are exceedingly low.. It carries out the reaction Release of an N-terminal amino acid, preferentially leucine, but not glutamic or aspartic acids.. Its function is as follows. Presumably involved in the processing and regular turnover of intracellular proteins. Catalyzes the removal of unsubstituted N-terminal amino acids from various peptides. In Bordetella parapertussis (strain 12822 / ATCC BAA-587 / NCTC 13253), this protein is Probable cytosol aminopeptidase.